Here is a 279-residue protein sequence, read N- to C-terminus: Putative phosphoenolpyruvate synthase regulatory protein (279 aa).

Residue 159 to 166 coordinates ADP; sequence GVSRSGKT.

This sequence belongs to the pyruvate, phosphate/water dikinase regulatory protein family. PSRP subfamily.

The enzyme catalyses [pyruvate, water dikinase] + ADP = [pyruvate, water dikinase]-phosphate + AMP + H(+). It carries out the reaction [pyruvate, water dikinase]-phosphate + phosphate + H(+) = [pyruvate, water dikinase] + diphosphate. Bifunctional serine/threonine kinase and phosphorylase involved in the regulation of the phosphoenolpyruvate synthase (PEPS) by catalyzing its phosphorylation/dephosphorylation. This is Putative phosphoenolpyruvate synthase regulatory protein from Ralstonia nicotianae (strain ATCC BAA-1114 / GMI1000) (Ralstonia solanacearum).